The sequence spans 60 residues: 5-hydroxytryptamine receptor 2B (60 aa).

The Extracellular portion of the chain corresponds to 1–4; that stretch reads VLCP. A helical membrane pass occupies residues 5–26; that stretch reads AWLFLDVLFSTASIMHLCAISV. Ergotamine-binding residues include Asp10 and Thr15. Positions 27 to 29 match the DRY motif; important for ligand-induced conformation changes motif; that stretch reads DRY. Over 27–46 the chain is Cytoplasmic; the sequence is DRYIAIKKPIQANQYNSRAT. Residues 47-60 form a helical membrane-spanning segment; sequence AFIKITVVWLISIG.

It belongs to the G-protein coupled receptor 1 family. Interacts (via C-terminus) with MPDZ. In terms of tissue distribution, detected in aorta, renal artery, jugular vein, vena cava and femoral vein.

Its subcellular location is the cell membrane. It localises to the synapse. The protein localises to the synaptosome. Functionally, G-protein coupled receptor for 5-hydroxytryptamine (serotonin). Also functions as a receptor for various ergot alkaloid derivatives and psychoactive substances. Ligand binding causes a conformation change that triggers signaling via guanine nucleotide-binding proteins (G proteins) and modulates the activity of downstream effectors. HTR2B is coupled to G(q)/G(11) G alpha proteins and activates phospholipase C-beta, releasing diacylglycerol (DAG) and inositol 1,4,5-trisphosphate (IP3) second messengers that modulate the activity of phosphatidylinositol 3-kinase and promote the release of Ca(2+) ions from intracellular stores, respectively. Beta-arrestin family members inhibit signaling via G proteins and mediate activation of alternative signaling pathways. Plays a role in the regulation of dopamine and 5-hydroxytryptamine release, 5-hydroxytryptamine uptake and in the regulation of extracellular dopamine and 5-hydroxytryptamine levels, and thereby affects neural activity. May play a role in the perception of pain. Plays a role in the regulation of behavior, including impulsive behavior. Required for normal proliferation of embryonic cardiac myocytes and normal heart development. Protects cardiomyocytes against apoptosis. Plays a role in the adaptation of pulmonary arteries to chronic hypoxia. Plays a role in vasoconstriction. Required for normal osteoblast function and proliferation, and for maintaining normal bone density. Required for normal proliferation of the interstitial cells of Cajal in the intestine. In Sus scrofa (Pig), this protein is 5-hydroxytryptamine receptor 2B (HTR2B).